The chain runs to 84 residues: Phosphoribosylformylglycinamidine synthase subunit PurS (84 aa).

Belongs to the PurS family. In terms of assembly, homodimer or homotetramer. Part of the FGAM synthase complex composed of 1 PurL, 1 PurQ and 2 PurS subunits.

Its subcellular location is the cytoplasm. It carries out the reaction N(2)-formyl-N(1)-(5-phospho-beta-D-ribosyl)glycinamide + L-glutamine + ATP + H2O = 2-formamido-N(1)-(5-O-phospho-beta-D-ribosyl)acetamidine + L-glutamate + ADP + phosphate + H(+). It functions in the pathway purine metabolism; IMP biosynthesis via de novo pathway; 5-amino-1-(5-phospho-D-ribosyl)imidazole from N(2)-formyl-N(1)-(5-phospho-D-ribosyl)glycinamide: step 1/2. Part of the phosphoribosylformylglycinamidine synthase complex involved in the purines biosynthetic pathway. Catalyzes the ATP-dependent conversion of formylglycinamide ribonucleotide (FGAR) and glutamine to yield formylglycinamidine ribonucleotide (FGAM) and glutamate. The FGAM synthase complex is composed of three subunits. PurQ produces an ammonia molecule by converting glutamine to glutamate. PurL transfers the ammonia molecule to FGAR to form FGAM in an ATP-dependent manner. PurS interacts with PurQ and PurL and is thought to assist in the transfer of the ammonia molecule from PurQ to PurL. In Bacillus subtilis (strain 168), this protein is Phosphoribosylformylglycinamidine synthase subunit PurS.